Here is a 185-residue protein sequence, read N- to C-terminus: NADH-quinone oxidoreductase subunit B (185 aa).

The [4Fe-4S] cluster site is built by C37, C38, C103, and C132.

This sequence belongs to the complex I 20 kDa subunit family. As to quaternary structure, NDH-1 is composed of 14 different subunits. Subunits NuoB, C, D, E, F, and G constitute the peripheral sector of the complex. [4Fe-4S] cluster is required as a cofactor.

Its subcellular location is the cell membrane. It carries out the reaction a quinone + NADH + 5 H(+)(in) = a quinol + NAD(+) + 4 H(+)(out). Its function is as follows. NDH-1 shuttles electrons from NADH, via FMN and iron-sulfur (Fe-S) centers, to quinones in the respiratory chain. The immediate electron acceptor for the enzyme in this species is believed to be a menaquinone. Couples the redox reaction to proton translocation (for every two electrons transferred, four hydrogen ions are translocated across the cytoplasmic membrane), and thus conserves the redox energy in a proton gradient. The chain is NADH-quinone oxidoreductase subunit B from Thermobifida fusca (strain YX).